A 149-amino-acid polypeptide reads, in one-letter code: Calmodulin-B (149 aa).

At alanine 2 the chain carries N-acetylalanine. 4 consecutive EF-hand domains span residues 8–43 (EQIAEFKEAFSLFDKDGDGTITTKELGTVMRSLGQN), 44–79 (PTEAELQDMINEVDADGNGTIDFPEFLTMMARKMKE), 81–116 (DSEEEIREAFRVFDKDGNGFISAAELRHVMTNLGEK), and 117–149 (LTDEEVDEMIREADIDGDGQVNYEEFVTMMTCK). Residues aspartate 21, aspartate 23, aspartate 25, threonine 27, glutamate 32, aspartate 57, aspartate 59, asparagine 61, threonine 63, glutamate 68, aspartate 94, aspartate 96, asparagine 98, and glutamate 105 each coordinate Ca(2+). Lysine 116 carries the post-translational modification N6,N6,N6-trimethyllysine. Ca(2+) is bound by residues aspartate 130, aspartate 132, aspartate 134, glutamine 136, and glutamate 141.

This sequence belongs to the calmodulin family.

Calmodulin mediates the control of a large number of enzymes, ion channels and other proteins by Ca(2+). Among the enzymes to be stimulated by the calmodulin-Ca(2+) complex are a number of protein kinases and phosphatases. The polypeptide is Calmodulin-B (Halocynthia roretzi (Sea squirt)).